Reading from the N-terminus, the 368-residue chain is Cyclic di-GMP phosphodiesterase TM_0186 (368 aa).

The Response regulatory domain occupies 2–114; it reads TVLIVEDDDI…LLRLKITHAL (113 aa). D49 carries the post-translational modification 4-aspartylphosphate. Positions 148 to 345 constitute an HD-GYP domain; it reads YEDFLFEVLE…ITDVYRREKD (198 aa). Residues E169, H173, H205, D206, H234, H260, H261, and D289 each coordinate a divalent metal cation. A disordered region spans residues 341 to 368; it reads RREKDEDTSHNGGRSHQSSPGEGVEGIR. Residues 350-360 show a composition bias toward polar residues; that stretch reads HNGGRSHQSSP.

It catalyses the reaction 3',3'-c-di-GMP + 2 H2O = 2 GMP + 2 H(+). Can function in vivo with either divalent iron or manganese occupying di- and trimetal sites. Dimetal is necessary and sufficient to catalyze conversion of c-di-GMP to pGpG, but conversion of pGpG to GMP requires an occupied trimetal site. Functionally, phosphodiesterase (PDE) that catalyzes the hydrolysis of cyclic diguanylate (c-di-GMP) to GMP. Hydrolyzes c-di-GMP to GMP in a two-step reaction, via the linear intermediate 5'-phosphoguanylyl(3'-&gt;5')guanosine (pGpG). This chain is Cyclic di-GMP phosphodiesterase TM_0186, found in Thermotoga maritima (strain ATCC 43589 / DSM 3109 / JCM 10099 / NBRC 100826 / MSB8).